The primary structure comprises 342 residues: MTLLLAGDIGGTKTILRLVEVSNSSELHNIYEESYQSGDFPDLVPMVQQFLVKANIPSHPEKACFAIAGPVVNNTAKLTNLVWFLDTERLAQELSIPFISLINDFAAVGYGIFGLSKQDLFTLQAGKHQTEAPIAIIGAGTGLGQGFLIKQGNQYQVFPSEGGHADFAPRNELEFQLLKYLLDKHDIQRVSVERVVSGQGVVAIYQFLRDRKLAIESPEIAQVVRTWEQQAGQAEKTVDPGAAIGKAAVQGSDRLSEQTLQLFIDAYGAEAGNLALKLLPYGGLYIAGGIAPKVLPLIENSNFLLNFSQKGRMRPLLEEIPVHIILNPQVGLIGAALCAARL.

Residue 7 to 12 coordinates ATP; that stretch reads GDIGGT.

The protein belongs to the bacterial glucokinase family.

The protein resides in the cytoplasm. The catalysed reaction is D-glucose + ATP = D-glucose 6-phosphate + ADP + H(+). The sequence is that of Glucokinase from Trichormus variabilis (strain ATCC 29413 / PCC 7937) (Anabaena variabilis).